The following is a 596-amino-acid chain: DNA mismatch repair protein MutL (596 aa).

It belongs to the DNA mismatch repair MutL/HexB family.

In terms of biological role, this protein is involved in the repair of mismatches in DNA. It is required for dam-dependent methyl-directed DNA mismatch repair. May act as a 'molecular matchmaker', a protein that promotes the formation of a stable complex between two or more DNA-binding proteins in an ATP-dependent manner without itself being part of a final effector complex. This is DNA mismatch repair protein MutL from Leptospira borgpetersenii serovar Hardjo-bovis (strain JB197).